A 376-amino-acid chain; its full sequence is Ribonucleoside-diphosphate reductase subunit beta (376 aa).

Residues D85, E116, and H119 each coordinate Fe cation. Residue Y123 is part of the active site. E205, E239, and H242 together coordinate Fe cation.

This sequence belongs to the ribonucleoside diphosphate reductase small chain family. Tetramer of two alpha and two beta subunits. The cofactor is Fe cation.

It catalyses the reaction a 2'-deoxyribonucleoside 5'-diphosphate + [thioredoxin]-disulfide + H2O = a ribonucleoside 5'-diphosphate + [thioredoxin]-dithiol. In terms of biological role, provides the precursors necessary for DNA synthesis. Catalyzes the biosynthesis of deoxyribonucleotides from the corresponding ribonucleotides. The polypeptide is Ribonucleoside-diphosphate reductase subunit beta (nrdB) (Buchnera aphidicola subsp. Baizongia pistaciae (strain Bp)).